The following is a 258-amino-acid chain: MDGIIEQKSMLVHSKISDAGKRNGLINTRNLMAESRDGLVSVYPAPQYQSHRVGASTVPASLDSSRSEPVQQLLDPNTLQQSVESRYRPNIILYSEGVLRSWGDGVTTDCCETTFIEDRSPTKDSLEYPDGKFIDLSADDIKIHTLSYDVEEEEEFQELESDYSSDTESEDNFLMMPPRDHLGLSVFSMLCCFWPLGIAAFYLSHETNKAVAKGDLHQASTSSRRALFLAVLSITIGTGVYVGVAVALIAYLSKNNHL.

The Cytoplasmic portion of the chain corresponds to 1 to 181; the sequence is MDGIIEQKSM…NFLMMPPRDH (181 aa). At Ser137 the chain carries Phosphoserine. Residues 182–202 traverse the membrane as a helical segment; it reads LGLSVFSMLCCFWPLGIAAFY. The Extracellular portion of the chain corresponds to 203 to 228; it reads LSHETNKAVAKGDLHQASTSSRRALF. The helical intramembrane region spans 229 to 249; it reads LAVLSITIGTGVYVGVAVALI. Topologically, residues 250–258 are extracellular; that stretch reads AYLSKNNHL.

Belongs to the CD225/Dispanin family. As to quaternary structure, homodimer. Interacts with GRIA1 and GRIA2.

The protein localises to the cell membrane. Its subcellular location is the early endosome membrane. The protein resides in the postsynaptic density membrane. It localises to the synapse. It is found in the cell projection. The protein localises to the dendrite. Its subcellular location is the dendritic spine. May regulate AMPA receptor content at nascent synapses, and have a role in postsynaptic development and maturation. The polypeptide is Synapse differentiation-inducing gene protein 1 (SYNDIG1) (Macaca fascicularis (Crab-eating macaque)).